A 60-amino-acid chain; its full sequence is Beta-defensin 8 (60 aa).

The N-terminal stretch at 1-22 is a signal peptide; sequence MRIHYLLFTFLLVLLSPLAAFS. The propeptide occupies 23 to 25; sequence QKI. Disulfide bonds link Cys31–Cys58, Cys38–Cys52, and Cys42–Cys59.

This sequence belongs to the beta-defensin family. As to expression, most highly expressed in testis and heart.

It is found in the secreted. Its function is as follows. A synthetic peptide displays antimicrobial activities against S.aureus, P.aeruginosa, E.coli and B.cepacia. The antimicrobial activity against S.aureus, E.coli and B.cepacia is reduced in raised concentration of NaCl, but its action against P.aeruginosa is independent of NaCl concentration. The protein is Beta-defensin 8 (Defb8) of Mus musculus (Mouse).